We begin with the raw amino-acid sequence, 721 residues long: Dipeptidyl-peptidase 7 (721 aa).

Positions Met-1–Ala-21 are cleaved as a signal peptide. Residues His-87, Asp-228, and Ser-656 each act as charge relay system in the active site.

Belongs to the peptidase S46 family.

Its function is as follows. Catalyzes the removal of dipeptides from the N-terminus of oligopeptides. Most potently cleaves the synthetic substrate Met-Leu-methylcoumaryl-7-amide (Met-Leu-MCA), followed by Leu-Arg-MCA, while this enzyme does not hydrolyze Gly-Arg-, Gly-Gly-, Lys-Lys-, or Gly-Pro-MCA. The protein is Dipeptidyl-peptidase 7 (dpp7) of Phocaeicola vulgatus (strain ATCC 8482 / DSM 1447 / JCM 5826 / CCUG 4940 / NBRC 14291 / NCTC 11154) (Bacteroides vulgatus).